Consider the following 30-residue polypeptide: Cysteine-rich venom protein okinavin (30 aa).

The tract at residues 1 to 30 is disordered; it reads SVDFDSESPRKPXIQNEIVDLHNPLRRXVN.

This sequence belongs to the CRISP family. In terms of processing, contains 8 disulfide bonds. In terms of tissue distribution, expressed by the venom gland.

Its subcellular location is the secreted. Functionally, inhibits calcium-activated potassium channels (KCa), voltage-gated potassium channel (Kv), and the calcium release channel/ryanodine receptor (RyR). In Ovophis okinavensis (Ryukyu Island pit viper), this protein is Cysteine-rich venom protein okinavin.